We begin with the raw amino-acid sequence, 351 residues long: O-methyltransferase apf6 (351 aa).

Residues Gly231 to Gly232, Asn279 to Phe280, and Arg295 each bind S-adenosyl-L-methionine. His299 functions as the Proton acceptor in the catalytic mechanism.

It belongs to the class I-like SAM-binding methyltransferase superfamily. Cation-independent O-methyltransferase family.

It participates in secondary metabolite biosynthesis. In terms of biological role, O-methyltransferase; part of the gene cluster that mediates the biosynthesis of the cyclic tetrapeptide apicidin F (APF). The non-ribosomal peptide synthetase apf1 incorporates four different amino acids to produce apicidin F: L-phenylalanine, D-pipecolic acid (D-pip), N-methoxy-L-tryptophan and L-2-aminooctanedioic acid. L-Phenylalanine is the only proteinogenic amino acid directly used by apf1. The 3 other apf1 substrates are non-proteinogenic and have to be modified by other enzymes of the cluster. Lysine is converted to delta-1-pyrroline-5-carboxylate (P5C) which is reduced to L-pipecolic acid (L-pip) by apf3. L-pip is epimerized to D-pip, probably by apf1 activity, prior to incorporation. L-Tryptophan is N-oxidyzed by one of the cytochrome P450 monooxygenases (apf7 or apf8), and further methylated at the hydroxy group by the O-methyltransferase apf6 to yield N-methoxy-L-tryptophan. The synthesis of the fourth apf1 substrate is more complex. The fatty acid synthase apf5 is involved in the synthesis of the octanoic acid backbone of L-2-aminooctanedioic acid by fixing one acetyl-CoA unit and three malonyl-CoA units. Then one of the cytochrome P450 monooxygenases (apf7 or apf8) may oxidize this backbone to 2-oxooctanoic acid. The aminotransferase apf4 is predicted to catalyze the exchange of the keto group with an amino group. The next step would be the oxidation of 2-aminooctanoic acid by one of the cytochrome P450 monooxygenases (apf7 or apf8). The last step is the oxidation of 2-amino-8-hydroxyoctanoic acid to 2-aminooctanedioic acid is catalyzed by the FAD-dependent monooxygenase apf9. This Gibberella fujikuroi (strain CBS 195.34 / IMI 58289 / NRRL A-6831) (Bakanae and foot rot disease fungus) protein is O-methyltransferase apf6.